We begin with the raw amino-acid sequence, 282 residues long: Casein kinase II subunit beta-2 (282 aa).

Residues 1–92 form a disordered region; it reads MYRERGMVGS…ESEVSGSDGE (92 aa). Positions 13–28 are enriched in basic and acidic residues; the sequence is EVVDRKRINEIHDNRP. Polar residues-rich tracts occupy residues 29-47 and 61-71; these read SHSMSQPVNGKGKVTSTSV and RSGSISKTNIS. Over residues 75 to 92 the composition is skewed to acidic residues; that stretch reads DISDTDSEESEVSGSDGE.

Belongs to the casein kinase 2 subunit beta family. As to quaternary structure, heterotetramer of two catalytic alpha subunits and two regulatory beta subunits. Interacts with CCA1. Post-translationally, phosphorylated by alpha subunit.

Its subcellular location is the cytoplasm. It is found in the cytosol. It localises to the nucleus. In terms of biological role, plays a complex role in regulating the basal catalytic activity of the alpha subunit. The tetrameric holoenzyme CK2, composed of two alpha and two beta subunits, phosphorylates the transcription factor PIF1 after an exposure to light, resulting in a proteasome-dependent degradation of PIF1 and promotion of photomorphogenesis. CK2 phosphorylates translation initiation factors. May participate in the regulation of the initiation of translation. This chain is Casein kinase II subunit beta-2 (CKB2), found in Arabidopsis thaliana (Mouse-ear cress).